The sequence spans 737 residues: Polyribonucleotide nucleotidyltransferase (737 aa).

Residues Asp489 and Asp495 each contribute to the Mg(2+) site. Positions 556–615 (PKIDTIKIDVDKIKIVIGKGGETIDKIIAETGVKIDIDEEGNVSIYSSDQDAINRAKEII) constitute a KH domain. The 69-residue stretch at 625–693 (DEVYRAKVVR…EKGRIDASMK (69 aa)) folds into the S1 motif domain. A disordered region spans residues 691–737 (SMKALLPRPPKPEHDEKGEKSERPHRPRHHKDHKPKKEFTETPKDSE). The segment covering 700-714 (PKPEHDEKGEKSERP) has biased composition (basic and acidic residues). Positions 715–724 (HRPRHHKDHK) are enriched in basic residues. The segment covering 725–737 (PKKEFTETPKDSE) has biased composition (basic and acidic residues).

Belongs to the polyribonucleotide nucleotidyltransferase family. Mg(2+) is required as a cofactor.

It is found in the cytoplasm. The enzyme catalyses RNA(n+1) + phosphate = RNA(n) + a ribonucleoside 5'-diphosphate. Involved in mRNA degradation. Catalyzes the phosphorolysis of single-stranded polyribonucleotides processively in the 3'- to 5'-direction. The polypeptide is Polyribonucleotide nucleotidyltransferase (Streptococcus pneumoniae (strain Taiwan19F-14)).